The sequence spans 572 residues: Chromatin assembly factor 1 subunit B (572 aa).

WD repeat units follow at residues 11 to 54, 64 to 103, 127 to 166, 169 to 208, 228 to 279, 301 to 347, and 351 to 392; these read HNKE…DGKA, RHTK…EPEQ, GHLE…KISI, EHKS…VAFN, FHDD…RPIA, RPVA…PFGY, and IHYH…IPLK. Threonine 401 is subject to Phosphothreonine. Positions 403 to 572 are disordered; the sequence is DTAKKAKNQT…LAPDDSSKTV (170 aa). A compositionally biased stretch (polar residues) spans 411 to 430; it reads QTHQGSSPGSRSVEGTPSNR. Serine 416 is subject to Phosphoserine. Phosphothreonine is present on threonine 426. Residues 431-452 are compositionally biased toward low complexity; it reads TQDPSSPCTTPSPTTQSPAPSA. Serine 436 carries the phosphoserine modification. At threonine 440 the chain carries Phosphothreonine. Serine 456 and serine 465 each carry phosphoserine. Lysine 501 carries the N6-acetyllysine modification. Residues threonine 502 and threonine 510 each carry the phosphothreonine modification. Polar residues predominate over residues 511-529; that stretch reads PLKTDTVPNPQPNSGTAPS. Over residues 546–559 the composition is skewed to basic and acidic residues; that stretch reads PELKRPRLEEREGD.

It belongs to the WD repeat HIR1 family. Subunit of the CAF-1 complex that contains RBBP4, CHAF1B and CHAF1A. CHAF1A binds directly to CHAF1B. Interacts with histones H3.1, H3.2 and H3.1t.

Its subcellular location is the nucleus. The protein localises to the cytoplasm. In terms of biological role, acts as a component of the histone chaperone complex chromatin assembly factor 1 (CAF-1), which assembles histone octamers onto DNA during replication and repair. CAF-1 performs the first step of the nucleosome assembly process, bringing newly synthesized histones H3 and H4 to replicating DNA; histones H2A/H2B can bind to this chromatin precursor subsequent to DNA replication to complete the histone octamer. In Mus musculus (Mouse), this protein is Chromatin assembly factor 1 subunit B.